Here is a 559-residue protein sequence, read N- to C-terminus: Serine/threonine-protein kinase VRK1 (559 aa).

One can recognise a Protein kinase domain in the interval 32 to 388; sequence YIVGKQFATG…EDDDEEEEVI (357 aa). ATP contacts are provided by residues 38–46 and lysine 61; that span reads FATGGFGRI. Residue aspartate 167 is the Proton acceptor of the active site. Disordered regions lie at residues 315–419 and 448–559; these read EAAQ…ATSD and SSCE…SSEV. 2 stretches are compositionally biased toward polar residues: residues 405-418 and 449-460; these read RSFN…TATS and SCESQYESNEPG. Residues 533–542 show a composition bias toward basic and acidic residues; the sequence is TSARYQEKRA. Positions 545 to 559 are enriched in polar residues; the sequence is NTKPTFDDSSCSSEV.

It belongs to the protein kinase superfamily. CK1 Ser/Thr protein kinase family. VRK subfamily. Post-translationally, autophosphorylates in vitro.

It localises to the nucleus. The protein localises to the cytoplasm. Its subcellular location is the cajal body. The enzyme catalyses L-seryl-[protein] + ATP = O-phospho-L-seryl-[protein] + ADP + H(+). It catalyses the reaction L-threonyl-[protein] + ATP = O-phospho-L-threonyl-[protein] + ADP + H(+). Functionally, serine/threonine kinase that phosphorylates baf-1, thus regulating the association of baf-1 with chromatin and nuclear membrane proteins during nuclear envelope formation. May act through the egl-17 signaling pathway. Essential in hermaphrodites for formation of the vulva, uterus, and uterine seam cells and for development and maintenance of the somatic gonad and thus the germ line. Acts to prevent cep-1 from triggering an inappropriate cell cycle arrest, thereby promoting germ cell proliferation. Regulates anchor cell polarity and the timing of anchor cell invasion through the basement membranes separating vulval and somatic gonadal cells during the L3 larval stage. This chain is Serine/threonine-protein kinase VRK1, found in Caenorhabditis briggsae.